Consider the following 245-residue polypeptide: 1-(5-phosphoribosyl)-5-[(5-phosphoribosylamino)methylideneamino] imidazole-4-carboxamide isomerase (245 aa).

Aspartate 11 (proton acceptor) is an active-site residue. Aspartate 132 functions as the Proton donor in the catalytic mechanism.

Belongs to the HisA/HisF family.

The protein resides in the cytoplasm. The enzyme catalyses 1-(5-phospho-beta-D-ribosyl)-5-[(5-phospho-beta-D-ribosylamino)methylideneamino]imidazole-4-carboxamide = 5-[(5-phospho-1-deoxy-D-ribulos-1-ylimino)methylamino]-1-(5-phospho-beta-D-ribosyl)imidazole-4-carboxamide. It functions in the pathway amino-acid biosynthesis; L-histidine biosynthesis; L-histidine from 5-phospho-alpha-D-ribose 1-diphosphate: step 4/9. The polypeptide is 1-(5-phosphoribosyl)-5-[(5-phosphoribosylamino)methylideneamino] imidazole-4-carboxamide isomerase (Bacillus licheniformis (strain ATCC 14580 / DSM 13 / JCM 2505 / CCUG 7422 / NBRC 12200 / NCIMB 9375 / NCTC 10341 / NRRL NRS-1264 / Gibson 46)).